A 102-amino-acid polypeptide reads, in one-letter code: Small ribosomal subunit protein uS10 (102 aa).

It belongs to the universal ribosomal protein uS10 family. In terms of assembly, part of the 30S ribosomal subunit.

Functionally, involved in the binding of tRNA to the ribosomes. This Nocardioides sp. (strain ATCC BAA-499 / JS614) protein is Small ribosomal subunit protein uS10.